A 209-amino-acid chain; its full sequence is Hydrogenase expression/formation protein HupM (209 aa).

Residues Glu-21, Asp-67, and His-98 each contribute to the Ni(2+) site.

This sequence belongs to the peptidase A31 family.

Its function is as follows. Not known. Could be involved in the processing of hydrogenase. The chain is Hydrogenase expression/formation protein HupM (hupM) from Azotobacter chroococcum mcd 1.